The chain runs to 681 residues: Rabphilin-3A (681 aa).

Positions 1 to 21 are disordered; it reads MTDTVVNRWMYPGDGPLQSND. The 118-residue stretch at 40-157 folds into the RabBD domain; it reads QRKQEELTDE…KRSGAWFFKG (118 aa). The segment at 88 to 145 adopts an FYVE-type zinc-finger fold; sequence GDGVNRCILCGEQLGMLGSACVVCEDCKKNVCTKCGVETSNNRPHPVWLCKICLEQRE. Cys94, Cys97, Cys111, Cys114, Cys119, Cys122, Cys137, and Cys140 together coordinate Zn(2+). The interval 162-375 is disordered; it reads VLPQPMPIKK…EEEANSYDSD (214 aa). Positions 199–208 are enriched in basic and acidic residues; the sequence is ARGDMEDRRP. Omega-N-methylarginine is present on Arg223. Positions 243 to 252 are enriched in basic and acidic residues; that stretch reads RDSEGWDHAH. Ser271 carries the phosphoserine modification. The span at 278–296 shows a compositional bias: pro residues; it reads APAPVPSPAPPQPVQPGPP. The segment covering 347–356 has biased composition (low complexity); that stretch reads AAPYSQAAPA. Residues 362–375 are compositionally biased toward acidic residues; it reads AEEEEEEANSYDSD. The C2 1 domain maps to 379–501; that stretch reads TLGALEFSLL…KANQRKNFNI (123 aa). Met409, Asp410, Asp416, Asp471, Glu472, Asp473, Glu479, Glu526, Asp568, Asp574, Asp628, Tyr629, Asp630, and Asp636 together coordinate Ca(2+). The 134-residue stretch at 537 to 670 folds into the C2 2 domain; it reads ERGKILVSLM…NKDKKIERWH (134 aa). Phosphoserine is present on residues Ser679 and Ser680.

As to quaternary structure, interacts with RAB3B, RAB3C, RAB3D, RAB8A, RAB27A and RAB27B. Interacts with RAB3A; this interaction recruits RPH3A to synaptic vesicules. Interacts (via C2B domain) with SNAP25. Interacts with deubiquitinating enzyme CAND1; this interaction results in the deubiquitination of RPH3A. Interacts with GRIN2A and DLG4; this ternary complex regulates NMDA receptor composition at postsynaptic membranes. Interacts with SNCA. The cofactor is Ca(2+). Ubiquitinated. Deubiquitinated by CAND1 to prevent its degradation. In terms of tissue distribution, specifically expressed in brain.

It localises to the cytoplasmic vesicle. The protein resides in the secretory vesicle. Its subcellular location is the synaptic vesicle membrane. The protein localises to the cell projection. It is found in the dendritic spine. It localises to the postsynaptic cell membrane. The protein resides in the membrane. Functionally, plays an essential role in docking and fusion steps of regulated exocytosis. At the presynaptic level, RPH3A is recruited by RAB3A to the synaptic vesicle membrane in a GTP-dependent manner where it modulates synaptic vesicle trafficking and calcium-triggered neurotransmitter release. In the post-synaptic compartment, forms a ternary complex with GRIN2A and DLG4 and regulates NMDA receptor stability. Also plays a role in the exocytosis of arginine vasopressin hormone. The polypeptide is Rabphilin-3A (Rph3a) (Mus musculus (Mouse)).